We begin with the raw amino-acid sequence, 546 residues long: Chaperonin GroEL (546 aa).

Residues 30–33 (TLGP), K51, 87–91 (DGTTT), G415, 479–481 (NAA), and D495 contribute to the ATP site. The disordered stretch occupies residues 525 to 546 (PEPKKDMPPMPGGGMGGMGGMY). The segment covering 536-546 (GGGMGGMGGMY) has biased composition (gly residues).

The protein belongs to the chaperonin (HSP60) family. Forms a cylinder of 14 subunits composed of two heptameric rings stacked back-to-back. Interacts with the co-chaperonin GroES.

It localises to the cytoplasm. It carries out the reaction ATP + H2O + a folded polypeptide = ADP + phosphate + an unfolded polypeptide.. Functionally, together with its co-chaperonin GroES, plays an essential role in assisting protein folding. The GroEL-GroES system forms a nano-cage that allows encapsulation of the non-native substrate proteins and provides a physical environment optimized to promote and accelerate protein folding. The protein is Chaperonin GroEL of Solidesulfovibrio magneticus (strain ATCC 700980 / DSM 13731 / RS-1) (Desulfovibrio magneticus).